The chain runs to 323 residues: Formyl peptide receptor-related sequence 4 (323 aa).

Residues 1 to 29 (MEVNISMPLNGSEVVFYDSTTSRVLWILS) are Extracellular-facing. 2 N-linked (GlcNAc...) asparagine glycosylation sites follow: asparagine 4 and asparagine 10. The helical transmembrane segment at 30 to 50 (LVVLFITFVLGVLGNGLVIWV) threads the bilayer. Residues 51 to 66 (AGFQMAHTVTTVSYLN) are Cytoplasmic-facing. Residues 67 to 87 (LALSDLSFMATLPLHIISMVM) form a helical membrane-spanning segment. The Extracellular segment spans residues 88–99 (RGKWLFGWFLCK). A disulfide bridge connects residues cysteine 98 and cysteine 176. The chain crosses the membrane as a helical span at residues 100–120 (LVHIIANINLFVSIFLITLIA). Residues 121–144 (MDRCICVLCPVWSQNHRTVSLARK) are Cytoplasmic-facing. Residues 145–165 (VVLGAWIFALLLTLPHFLFLT) traverse the membrane as a helical segment. The Extracellular portion of the chain corresponds to 166–202 (TVRDARGDVYCISKFESWVATSEEQLKVSVIAATASG). The chain crosses the membrane as a helical span at residues 203–223 (IINFIIGFSMPMSFIAICYGL). Over 224–241 (MAAKICRRGFVNSSRPLR) the chain is Cytoplasmic. Residues 242-262 (VLTAVAVSFFVCWFPFQLIML) form a helical membrane-spanning segment. The Extracellular segment spans residues 263-280 (LGNIFNNETLSIIHMLVN). Asparagine 269 carries N-linked (GlcNAc...) asparagine glycosylation. A helical transmembrane segment spans residues 281–301 (PANTLASFNSCLNPILYVFLG). Over 302–323 (QEFRDRLIYSLYASLERALRED) the chain is Cytoplasmic.

Belongs to the G-protein coupled receptor 1 family. Expressed in 0.6 % of a subset of sensory neurons located in the apical layer of the vomeronasal organ. Each neuron appears to express only one receptor gene.

It localises to the cell membrane. In terms of biological role, may have an olfactory function associated with the identification of pathogens or of pathogenic states. The polypeptide is Formyl peptide receptor-related sequence 4 (Fpr-rs4) (Mus musculus (Mouse)).